We begin with the raw amino-acid sequence, 570 residues long: 4-hydroxy-7-methoxy-3-oxo-3,4-dihydro-2H-1,4-benzoxazin-2-yl glucoside beta-D-glucosidase 1c, chloroplastic (570 aa).

Residues 1 to 50 constitute a chloroplast transit peptide; sequence MALLAAATLNPTTHLSIRSRAGHNSENLWLRSAASSQKSKGRFCNLTVRA. A beta-D-glucoside contacts are provided by residues Q92, H194, and 239–240; that span reads NE. The active-site Proton donor is the E240. C259 and C265 are oxidised to a cystine. A beta-D-glucoside is bound by residues Y383, E456, W504, 511–512, and F520; that span reads EW. The active-site Nucleophile is the E456.

The protein belongs to the glycosyl hydrolase 1 family. Homo- and heterohexamers. As to expression, expressed in young seedlings early after germination.

The protein localises to the plastid. Its subcellular location is the chloroplast. It catalyses the reaction Hydrolysis of terminal, non-reducing beta-D-glucosyl residues with release of beta-D-glucose.. It carries out the reaction DIMBOA beta-D-glucoside + H2O = DIMBOA + D-glucose. The enzyme catalyses DIBOA beta-D-glucoside + H2O = DIBOA + D-glucose. Its function is as follows. Acts in defense of young plant parts against pests via the production of hydroxamic acids from hydroxamic acid glucosides. Enzymatic activity is highly correlated with plant growth. The preferred substrate is DIMBOA-beta-D-glucoside. This chain is 4-hydroxy-7-methoxy-3-oxo-3,4-dihydro-2H-1,4-benzoxazin-2-yl glucoside beta-D-glucosidase 1c, chloroplastic (GLU1C), found in Triticum aestivum (Wheat).